The sequence spans 358 residues: N-acylethanolamine-hydrolyzing acid amidase (358 aa).

The N-terminal stretch at 1 to 26 is a signal peptide; sequence MQGTGHPVRPVLELLLLLLLLAGVGG. 2 N-linked (GlcNAc...) asparagine glycosylation sites follow: asparagine 39 and asparagine 108. The active-site Nucleophile is cysteine 127. Asparagine 310, asparagine 334, and asparagine 356 each carry an N-linked (GlcNAc...) asparagine glycan.

Belongs to the acid ceramidase family. Heterodimer of an alpha and a beta subunit, produced by autocatalytic cleavage. Post-translationally, N-glycosylated. Tunicamycin treatment causes a reduction in specific activity against N-palmitoylethanolamine. In terms of processing, autoproteolytic cleavage at pH 4.5 gives rise to the alpha and beta subunit. Cleavage gives rise to a conformation change that activates the enzyme. The same catalytic Cys residue mediates the autoproteolytic cleavage and subsequent hydrolysis of lipid substrates.

It is found in the lysosome. It localises to the membrane. It catalyses the reaction N-hexadecanoylethanolamine + H2O = ethanolamine + hexadecanoate. The enzyme catalyses an N-(long-chain fatty acyl)ethanolamine + H2O = a long-chain fatty acid + ethanolamine. It carries out the reaction N-dodecanoylethanolamine + H2O = dodecanoate + ethanolamine. The catalysed reaction is N-tetradecanoylethanolamine + H2O = tetradecanoate + ethanolamine. It catalyses the reaction an N-acylsphing-4-enine + H2O = sphing-4-enine + a fatty acid. The enzyme catalyses N-hexadecanoylsphing-4-enine + H2O = sphing-4-enine + hexadecanoate. It carries out the reaction N-dodecanoylsphing-4-enine + H2O = dodecanoate + sphing-4-enine. The protein operates within lipid metabolism; fatty acid metabolism. Degrades bioactive fatty acid amides to their corresponding acids, with the following preference: N-palmitoylethanolamine &gt; N-myristoylethanolamine &gt; N-stearoylethanolamine &gt; N-oleoylethanolamine &gt; N-linoleoylethanolamine &gt; N-arachidonoylethanolamine. The sequence is that of N-acylethanolamine-hydrolyzing acid amidase from Oryctolagus cuniculus (Rabbit).